The chain runs to 473 residues: Photosystem II CP43 reaction center protein (473 aa).

Residues 1 to 14 constitute a propeptide that is removed on maturation; the sequence is MKTLYSLRRFYHVE. An N-acetylthreonine modification is found at T15. Phosphothreonine is present on T15. 5 consecutive transmembrane segments (helical) span residues 69–93, 134–155, 178–200, 255–275, and 291–312; these read LFEV…PHLA, LLGP…KDRN, KALY…RKIT, KPFA…LSYS, and WFNN…ASQA. E367 contributes to the [CaMn4O5] cluster binding site. A helical transmembrane segment spans residues 447–471; sequence RARAAAAGFEKGIDRDFEPVLSMTP.

Belongs to the PsbB/PsbC family. PsbC subfamily. PSII is composed of 1 copy each of membrane proteins PsbA, PsbB, PsbC, PsbD, PsbE, PsbF, PsbH, PsbI, PsbJ, PsbK, PsbL, PsbM, PsbT, PsbX, PsbY, PsbZ, Psb30/Ycf12, at least 3 peripheral proteins of the oxygen-evolving complex and a large number of cofactors. It forms dimeric complexes. Binds multiple chlorophylls and provides some of the ligands for the Ca-4Mn-5O cluster of the oxygen-evolving complex. It may also provide a ligand for a Cl- that is required for oxygen evolution. PSII binds additional chlorophylls, carotenoids and specific lipids. is required as a cofactor.

Its subcellular location is the plastid. It localises to the chloroplast thylakoid membrane. Its function is as follows. One of the components of the core complex of photosystem II (PSII). It binds chlorophyll and helps catalyze the primary light-induced photochemical processes of PSII. PSII is a light-driven water:plastoquinone oxidoreductase, using light energy to abstract electrons from H(2)O, generating O(2) and a proton gradient subsequently used for ATP formation. This Phaseolus vulgaris (Kidney bean) protein is Photosystem II CP43 reaction center protein.